Here is a 380-residue protein sequence, read N- to C-terminus: Type 4 apparatus protein DotM (380 aa).

2 consecutive transmembrane segments (helical) span residues Met-18–Ala-38 and Tyr-99–Leu-119.

The T4BSS is a complex nanomachine composed of several subcomplexes. This subunit is part of the Type IV Coupling Complex (T4CC), a subcomplex composed of the DotLMNYZ core and the IcmSW-LvgA adapter subunits, linked by the C-terminal tail of DotL. Six DotLMNYZ hetero-pentameric units may assemble into a hexameric nanomachine, forming an inner membrane channel for effectors to pass through. Interacts directly with DotL.

It localises to the cell inner membrane. Component of the Dot/Icm type IVB secretion system (T4BSS), which is used to inject bacterial effector proteins into eukaryotic host cells. Part of a subcomplex which recruits effector proteins and delivers them to the core transmembrane subcomplex. Forms the interacting surface for recruitment of acidic Glu-rich motif-containing effectors. This is Type 4 apparatus protein DotM from Legionella pneumophila subsp. pneumophila (strain Philadelphia 1 / ATCC 33152 / DSM 7513).